Here is a 157-residue protein sequence, read N- to C-terminus: Endoribonuclease YbeY (157 aa).

3 residues coordinate Zn(2+): His114, His118, and His124.

Belongs to the endoribonuclease YbeY family. It depends on Zn(2+) as a cofactor.

It localises to the cytoplasm. Single strand-specific metallo-endoribonuclease involved in late-stage 70S ribosome quality control and in maturation of the 3' terminus of the 16S rRNA. This Yersinia enterocolitica serotype O:8 / biotype 1B (strain NCTC 13174 / 8081) protein is Endoribonuclease YbeY.